Here is a 199-residue protein sequence, read N- to C-terminus: ATP-dependent Clp protease proteolytic subunit (199 aa).

Ser-98 acts as the Nucleophile in catalysis. His-123 is an active-site residue.

Belongs to the peptidase S14 family. As to quaternary structure, fourteen ClpP subunits assemble into 2 heptameric rings which stack back to back to give a disk-like structure with a central cavity, resembling the structure of eukaryotic proteasomes.

The protein localises to the cytoplasm. It catalyses the reaction Hydrolysis of proteins to small peptides in the presence of ATP and magnesium. alpha-casein is the usual test substrate. In the absence of ATP, only oligopeptides shorter than five residues are hydrolyzed (such as succinyl-Leu-Tyr-|-NHMec, and Leu-Tyr-Leu-|-Tyr-Trp, in which cleavage of the -Tyr-|-Leu- and -Tyr-|-Trp bonds also occurs).. Cleaves peptides in various proteins in a process that requires ATP hydrolysis. Has a chymotrypsin-like activity. Plays a major role in the degradation of misfolded proteins. In Ehrlichia chaffeensis (strain ATCC CRL-10679 / Arkansas), this protein is ATP-dependent Clp protease proteolytic subunit.